The chain runs to 1050 residues: MKDAERIPGPKPLPVVGNLFDIDPEHSLESIVAFAEKFGPLFQITINGEKQIFATSQALVDELCDELRFHKAVVTGLEILRLLAHDGLFTAYHGERGWGIAHRILVPAFGPLRIRNMLDDMSDVAQQLCLKWARQGGSTSINITEDFTRLTLDTIALCTMGFRLNSFYNNETMHPFVQSMLYVLREADIQANLPGIANSIRVSAQRRMHKNIEAMRTMARGIIQERRKNKNPVDDILNTLLNGRDPVTGEGMSDDSIIDNVITFLIAGHETTSGLLSFTFYFLIQHPHILKKAQEEVDETVGLAQISAQHLAELPYIDAILKESLRLMPTAPGFTVTPKKTEVLGGRWMINAGQPVNVLLPACLRDQSVFGPDADEFRPERMLAENFSKLPPNSWKPFGNGERGCIGRAFAWQEAQLVVAMILQTFDLVPDDPSYQLRIKETLTIKPDGFRIRATLRRGQTATGLSRRSMLVARDGSSEESSNHPAEARGDHAPARGQPVSFFYGSNSGTCKALAHQLASNMMSRGYTTQKLAPLDNAVDNLPRDQPVIILTTTYDGQPTDNAKKFVAWLETGNVLSLQGISYAVFGCGHHDWTQTFYRIPILIDDLMYKAGATRLAPRGAANAAVSDLFSDLEAWEETSLLPALRENFLPSNSTDFDPLNPHQIQLSLSKPRRVDLHKGLIEAKVTAVRVLTSPDTPEKRHLEFCFQGDLSLRPGDHLNILPVNPPSTVSRVLAQFNLAPDYNITVNSFNTLGLPQATPVSASELFSSYVELCQPATRNNLKSLIAATQSDTVKQELNRLYDSYEFIVRDKRVSVLDLLEQFPSISLPIAAFISMLPALRVRTYSLSMAPAFKPSHSSLTFSVINEPAWRGSGQHLGVASNYLASLTSGSIFYFSPRPAKETFHLPKDPSRTPIIMICAGSGLAPFLSFIQDRMVLKQQNKPLAKAFLFFGCRGRSLDDLYHEELSEYEAAGVVEVRRAYSKTPEFDIAKGCRYVQHRLVTEGQAILSLWAQNAIIYVCGSTSMAKGAEAVLQNMLGPLPKERYVTEIF.

Heme is bound at residue C405. The segment at 461–495 is disordered; the sequence is TATGLSRRSMLVARDGSSEESSNHPAEARGDHAPA. The region spanning 500–641 is the Flavodoxin-like domain; sequence VSFFYGSNSG…DLEAWEETSL (142 aa). FMN-binding positions include 506 to 510 and 585 to 617; these read SNSGT and VFGCGHHDWTQTFYRIPILIDDLMYKAGATRLA. The FAD-binding FR-type domain occupies 679–907; sequence KGLIEAKVTA…RPAKETFHLP (229 aa).

The protein in the N-terminal section; belongs to the cytochrome P450 family. The cofactor is FAD. FMN serves as cofactor. It depends on heme as a cofactor.

The catalysed reaction is 2 oxidized [cytochrome P450] + NADPH = 2 reduced [cytochrome P450] + NADP(+) + H(+). It catalyses the reaction an organic molecule + reduced [NADPH--hemoprotein reductase] + O2 = an alcohol + oxidized [NADPH--hemoprotein reductase] + H2O + H(+). It carries out the reaction dodecanoate + reduced [NADPH--hemoprotein reductase] + O2 = 5-hydroxydodecanoate + oxidized [NADPH--hemoprotein reductase] + H2O + H(+). The enzyme catalyses tetradecanoate + reduced [NADPH--hemoprotein reductase] + O2 = 7-hydroxytetradecanoate + oxidized [NADPH--hemoprotein reductase] + H2O + H(+). The catalysed reaction is dodecan-1-ol + reduced [NADPH--hemoprotein reductase] + O2 = 1,5-dodecanediol + oxidized [NADPH--hemoprotein reductase] + H2O + H(+). It catalyses the reaction dodecan-1-ol + reduced [NADPH--hemoprotein reductase] + O2 = 1,4-dodecanediol + oxidized [NADPH--hemoprotein reductase] + H2O + H(+). It carries out the reaction dodecan-1-ol + reduced [NADPH--hemoprotein reductase] + O2 = 1,6-dodecanediol + oxidized [NADPH--hemoprotein reductase] + H2O + H(+). Self-sufficient cytochrome P450 monooxygenase that catalyzes the regioselective in-chain hydroxylation of alkanes, fatty alcohols, and fatty acids at the omega-7 position. Performs hydroxylation of C10-C16 n-alkanes and C12 and C14 fatty alcohols; and thereby enables the one step biocatalytic synthesis of rare alcohols such as 5-dodecanol and 7-tetradecanol. Converts 1-dodecanol into 1,5-dodecanediol as major product with very little sub-terminally hydroxylated products with the 1,4-dodecanediol and 1,6-dodecanediol more abundant. Converts dodecanoic acid to 5-hydroxydodecanoic acid which can be further converted into delta-dodecalactone by lactonization of the 5-hydroxy acid at low pH. Also gives sub-terminal hydroxylation of dodecanoic acid with 9-hydroxydodecanoic acid being the second most abundant product. The polypeptide is Self-sufficient cytochrome P450 monooxygenase CYP505E5 (Aspergillus kawachii (strain NBRC 4308) (White koji mold)).